The sequence spans 209 residues: Uracil phosphoribosyltransferase (209 aa).

Residues R79, R104, and 131-139 (DPMLATGGS) contribute to the 5-phospho-alpha-D-ribose 1-diphosphate site. Residues I194 and 199 to 201 (GDA) contribute to the uracil site. Residue D200 participates in 5-phospho-alpha-D-ribose 1-diphosphate binding.

The protein belongs to the UPRTase family. The cofactor is Mg(2+).

It carries out the reaction UMP + diphosphate = 5-phospho-alpha-D-ribose 1-diphosphate + uracil. Its pathway is pyrimidine metabolism; UMP biosynthesis via salvage pathway; UMP from uracil: step 1/1. With respect to regulation, allosterically activated by GTP. Catalyzes the conversion of uracil and 5-phospho-alpha-D-ribose 1-diphosphate (PRPP) to UMP and diphosphate. The polypeptide is Uracil phosphoribosyltransferase (Alkaliphilus oremlandii (strain OhILAs) (Clostridium oremlandii (strain OhILAs))).